The chain runs to 388 residues: Chorismate synthase (388 aa).

NADP(+) is bound by residues arginine 39 and arginine 45. Residues 130 to 132 (RSS), 251 to 252 (NA), alanine 296, 311 to 315 (KPIPT), and arginine 337 each bind FMN.

This sequence belongs to the chorismate synthase family. Homotetramer. FMNH2 is required as a cofactor.

It catalyses the reaction 5-O-(1-carboxyvinyl)-3-phosphoshikimate = chorismate + phosphate. It participates in metabolic intermediate biosynthesis; chorismate biosynthesis; chorismate from D-erythrose 4-phosphate and phosphoenolpyruvate: step 7/7. Catalyzes the anti-1,4-elimination of the C-3 phosphate and the C-6 proR hydrogen from 5-enolpyruvylshikimate-3-phosphate (EPSP) to yield chorismate, which is the branch point compound that serves as the starting substrate for the three terminal pathways of aromatic amino acid biosynthesis. This reaction introduces a second double bond into the aromatic ring system. This is Chorismate synthase from Streptococcus equi subsp. zooepidemicus (strain H70).